A 79-amino-acid chain; its full sequence is Putative defensin-like protein 80 (79 aa).

The N-terminal stretch at 1–26 is a signal peptide; that stretch reads MDVQRSSYIFIALSIIAMFLITGVKP. Disulfide bonds link C32/C65, C36/C58, C44/C63, and C48/C64.

This sequence belongs to the DEFL family.

Its subcellular location is the secreted. The polypeptide is Putative defensin-like protein 80 (LCR81) (Arabidopsis thaliana (Mouse-ear cress)).